The chain runs to 365 residues: Cyclin-O protein B (365 aa).

The disordered stretch occupies residues 22 to 64 (SGKRKRDSVYSPGDATPGDRGEGEPKCPSVGTKKRAKYSRHRK). The span at 53-64 (TKKRAKYSRHRK) shows a compositional bias: basic residues.

It belongs to the cyclin family.

Its subcellular location is the cytoplasm. Its function is as follows. Specifically required for generation of multiciliated cells, possibly by promoting a cell cycle state compatible with centriole amplification and maturation. Acts downstream of mcidas to promote mother centriole amplification and maturation in preparation for apical docking. This chain is Cyclin-O protein B (ccno-b), found in Xenopus laevis (African clawed frog).